Reading from the N-terminus, the 630-residue chain is Biosynthetic arginine decarboxylase (630 aa).

An N6-(pyridoxal phosphate)lysine modification is found at K99. Position 279–289 (279–289 (FDVGGGLGVDY)) interacts with substrate.

It belongs to the Orn/Lys/Arg decarboxylase class-II family. SpeA subfamily. Mg(2+) is required as a cofactor. The cofactor is pyridoxal 5'-phosphate.

It carries out the reaction L-arginine + H(+) = agmatine + CO2. The protein operates within amine and polyamine biosynthesis; agmatine biosynthesis; agmatine from L-arginine: step 1/1. Catalyzes the biosynthesis of agmatine from arginine. The protein is Biosynthetic arginine decarboxylase of Neisseria meningitidis serogroup B (strain ATCC BAA-335 / MC58).